Consider the following 430-residue polypeptide: Serine--tRNA ligase (430 aa).

Residues 103 to 127 (LPNIPDDDVPDGRDENDNQEVSRWG) are disordered. Position 237-239 (237-239 (TAE)) interacts with L-serine. 268 to 270 (RSE) lines the ATP pocket. Glu-291 provides a ligand contact to L-serine. 355–358 (EISS) contributes to the ATP binding site. Ser-391 contributes to the L-serine binding site.

It belongs to the class-II aminoacyl-tRNA synthetase family. Type-1 seryl-tRNA synthetase subfamily. As to quaternary structure, homodimer. The tRNA molecule binds across the dimer.

The protein localises to the cytoplasm. The catalysed reaction is tRNA(Ser) + L-serine + ATP = L-seryl-tRNA(Ser) + AMP + diphosphate + H(+). It catalyses the reaction tRNA(Sec) + L-serine + ATP = L-seryl-tRNA(Sec) + AMP + diphosphate + H(+). The protein operates within aminoacyl-tRNA biosynthesis; selenocysteinyl-tRNA(Sec) biosynthesis; L-seryl-tRNA(Sec) from L-serine and tRNA(Sec): step 1/1. Catalyzes the attachment of serine to tRNA(Ser). Is also able to aminoacylate tRNA(Sec) with serine, to form the misacylated tRNA L-seryl-tRNA(Sec), which will be further converted into selenocysteinyl-tRNA(Sec). In Sodalis glossinidius (strain morsitans), this protein is Serine--tRNA ligase.